We begin with the raw amino-acid sequence, 319 residues long: MSKKIKQELENNKLSKRLRHAVGDAINDFNMIEPGDKIMVCLSGGKDSYALLDILRRLQASAPIDFQLVAVNLDQKQPGFPEEVLPTYLESIGVPYKIVEEDTYSTVKRVLDEGKTTCSLCSRLRRGILYRTAKELGCTKIALGHHRDDILATLFLNMFYGGKLKAMPPKLVSDNGEHIVIRPLAYVKEKDLIKYAELKQFPIIPCNLCGSQPNLQRQVIGDMLRDWDKRFPGRIESMFSALQNVVPSHLADTELFDFVGLERGQSLKHGGDLAFDSEKMPERFSDGSEEDESEIKIEPQKAERKVINILANKPKACGA.

The short motif at 43–48 (SGGKDS) is the PP-loop motif element. Cysteine 118, cysteine 121, and cysteine 209 together coordinate [4Fe-4S] cluster.

This sequence belongs to the TtcA family. Homodimer. Mg(2+) serves as cofactor. [4Fe-4S] cluster is required as a cofactor.

The protein localises to the cytoplasm. The enzyme catalyses cytidine(32) in tRNA + S-sulfanyl-L-cysteinyl-[cysteine desulfurase] + AH2 + ATP = 2-thiocytidine(32) in tRNA + L-cysteinyl-[cysteine desulfurase] + A + AMP + diphosphate + H(+). The protein operates within tRNA modification. In terms of biological role, catalyzes the ATP-dependent 2-thiolation of cytidine in position 32 of tRNA, to form 2-thiocytidine (s(2)C32). The sulfur atoms are provided by the cysteine/cysteine desulfurase (IscS) system. In Neisseria meningitidis serogroup A / serotype 4A (strain DSM 15465 / Z2491), this protein is tRNA-cytidine(32) 2-sulfurtransferase.